The primary structure comprises 392 residues: UPF0229 protein CPE1333 (392 aa).

Residues 75–100 are disordered; it reads VTTGTGEERRGDRISSDKRKAISNNK. Basic and acidic residues predominate over residues 80 to 94; sequence GEERRGDRISSDKRK.

Belongs to the UPF0229 family.

The chain is UPF0229 protein CPE1333 from Clostridium perfringens (strain 13 / Type A).